A 277-amino-acid chain; its full sequence is Shikimate dehydrogenase (NADP(+)) (277 aa).

Residues 14 to 16 (SKS) and Thr-61 contribute to the shikimate site. The Proton acceptor role is filled by Lys-65. Asp-77 is an NADP(+) binding site. Shikimate contacts are provided by Asn-86 and Asp-102. Residues 127–131 (GAGGA), 151–156 (NRTPDK), and Met-215 contribute to the NADP(+) site. Tyr-217 contributes to the shikimate binding site. Residue Gly-239 participates in NADP(+) binding.

It belongs to the shikimate dehydrogenase family. In terms of assembly, homodimer.

It catalyses the reaction shikimate + NADP(+) = 3-dehydroshikimate + NADPH + H(+). The protein operates within metabolic intermediate biosynthesis; chorismate biosynthesis; chorismate from D-erythrose 4-phosphate and phosphoenolpyruvate: step 4/7. Involved in the biosynthesis of the chorismate, which leads to the biosynthesis of aromatic amino acids. Catalyzes the reversible NADPH linked reduction of 3-dehydroshikimate (DHSA) to yield shikimate (SA). This chain is Shikimate dehydrogenase (NADP(+)), found in Nitrosomonas eutropha (strain DSM 101675 / C91 / Nm57).